The primary structure comprises 159 residues: SsrA-binding protein (159 aa).

The segment at 131–159 (KGKKLHDKRESEKERDWNRQKSRLLKDNG) is disordered. The segment covering 137–159 (DKRESEKERDWNRQKSRLLKDNG) has biased composition (basic and acidic residues).

This sequence belongs to the SmpB family.

The protein resides in the cytoplasm. Required for rescue of stalled ribosomes mediated by trans-translation. Binds to transfer-messenger RNA (tmRNA), required for stable association of tmRNA with ribosomes. tmRNA and SmpB together mimic tRNA shape, replacing the anticodon stem-loop with SmpB. tmRNA is encoded by the ssrA gene; the 2 termini fold to resemble tRNA(Ala) and it encodes a 'tag peptide', a short internal open reading frame. During trans-translation Ala-aminoacylated tmRNA acts like a tRNA, entering the A-site of stalled ribosomes, displacing the stalled mRNA. The ribosome then switches to translate the ORF on the tmRNA; the nascent peptide is terminated with the 'tag peptide' encoded by the tmRNA and targeted for degradation. The ribosome is freed to recommence translation, which seems to be the essential function of trans-translation. This Rhizobium etli (strain CIAT 652) protein is SsrA-binding protein.